The primary structure comprises 266 residues: Putative carbamate hydrolase RutD (266 aa).

It belongs to the AB hydrolase superfamily. Hydrolase RutD family.

The catalysed reaction is carbamate + 2 H(+) = NH4(+) + CO2. In terms of biological role, involved in pyrimidine catabolism. May facilitate the hydrolysis of carbamate, a reaction that can also occur spontaneously. The polypeptide is Putative carbamate hydrolase RutD (Escherichia coli O157:H7).